Reading from the N-terminus, the 137-residue chain is Envelope glycoprotein L (137 aa).

Residues Met-1 to Ala-25 form the signal peptide. The interval Asn-23–Leu-128 is interaction with gH. 2 disulfide bridges follow: Cys-28/Cys-56 and Cys-29/Cys-79.

The protein belongs to the herpesviridae glycoprotein L family. Interacts with glycoprotein H (gH); this interaction is necessary for the correct processing and cell surface expression of gH. The heterodimer gH/gL seems to interact with gB trimers during fusion. The heterodimer gH/gL interacts with host EPHA2 to facilitate virus internalization and fusion.

It localises to the virion membrane. It is found in the host cell membrane. The protein resides in the host Golgi apparatus. Its subcellular location is the host trans-Golgi network. Functionally, the heterodimer glycoprotein H-glycoprotein L is required for the fusion of viral and plasma membranes leading to virus entry into the host cell. Acts as a functional inhibitor of gH and maintains gH in an inhibited form. Upon binding to host integrins, gL dissociates from gH leading to activation of the viral fusion glycoproteins gB and gH. The heterodimer gH/gL targets also host EPHA2 to promote viral entry. The protein is Envelope glycoprotein L of Homo sapiens (Human).